We begin with the raw amino-acid sequence, 368 residues long: MAKNDSKDANKEELLEKLVKELEKNHGTGSVMLMGKGLDNSNLAVVPSGCLSLDIALGVGGYPRGRIIEIYGNESSGKTTLALHSLAEVQKLNGIVAFVDAEHALDVEYARKLGVDVDKLIVSQPDYGEQALEIVDSLVRSNIVDLIVVDSVAALVPKAEIEGAMGDSHMGLQARLMSQALRKLAGSINKSKSIVIFINQVRMKIGVVYGNPETTTGGIALKFYATIRVEVRKGNPIREGKDQIGNETTLKVVKNKVAPPFKQANVDMIFGRGIPKENDIFNIAVEEELIQRKGAWFSFINENGEEISLGQGKTNSVSYLMENPDILDYLEYTIRKKHNLIIPDYLIEKFESNSSKGKKVKSEELQEN.

72–79 (GNESSGKT) provides a ligand contact to ATP.

Belongs to the RecA family.

The protein resides in the cytoplasm. In terms of biological role, can catalyze the hydrolysis of ATP in the presence of single-stranded DNA, the ATP-dependent uptake of single-stranded DNA by duplex DNA, and the ATP-dependent hybridization of homologous single-stranded DNAs. It interacts with LexA causing its activation and leading to its autocatalytic cleavage. The chain is Protein RecA from Petrotoga mobilis (strain DSM 10674 / SJ95).